The chain runs to 295 residues: Tissue factor (295 aa).

The first 32 residues, 1–32 (METPAWPRVPRPETAVARTLLLGWVFAQVAGA), serve as a signal peptide directing secretion. At 33–251 (SGTTNTVAAY…MGQEKGEFRE (219 aa)) the chain is on the extracellular side. 2 consecutive short sequence motifs (WKS motif) follow at residues 46–48 (WKS) and 77–79 (WKS). An intrachain disulfide couples Cys-81 to Cys-89. Asn-156 and Asn-169 each carry an N-linked (GlcNAc...) asparagine glycan. The WKS motif signature appears at 190 to 192 (WKS). Cys-218 and Cys-241 are oxidised to a cystine. A helical transmembrane segment spans residues 252–274 (IFYIIGAVVFVVIILVIILAISL). The Cytoplasmic segment spans residues 275–295 (HKCRKAGVGQSWKENSPLNVS). Cys-277 carries the S-palmitoyl cysteine lipid modification.

It belongs to the tissue factor family. As to quaternary structure, interacts with HSPE; the interaction, inhibited by heparin, promotes the generation of activated factor X and activates coagulation in the presence of activated factor VII. In terms of tissue distribution, lung, placenta and pancreas.

It is found in the membrane. The protein localises to the secreted. Its function is as follows. Initiates blood coagulation by forming a complex with circulating factor VII or VIIa. The [TF:VIIa] complex activates factors IX or X by specific limited proteolysis. TF plays a role in normal hemostasis by initiating the cell-surface assembly and propagation of the coagulation protease cascade. This is Tissue factor (F3) from Homo sapiens (Human).